The sequence spans 70 residues: Protein SlyX homolog (70 aa).

Belongs to the SlyX family.

In Shewanella sediminis (strain HAW-EB3), this protein is Protein SlyX homolog.